We begin with the raw amino-acid sequence, 952 residues long: UvrABC system protein A (952 aa).

38–45 (GLSGSGKS) serves as a coordination point for ATP. A C4-type zinc finger spans residues 259–286 (CDKCGFSISELEPRLFSFNSPLGSCSYC). ABC transporter domains lie at 316-595 (FKNI…SNSI) and 615-944 (GNGK…QYLS). 647–654 (GVSGSGKS) is a binding site for ATP. A C4-type zinc finger spans residues 746–772 (CDKCFGDGVIRIEMHFLPDVYVKCEVC).

Belongs to the ABC transporter superfamily. UvrA family. As to quaternary structure, forms a heterotetramer with UvrB during the search for lesions.

It localises to the cytoplasm. In terms of biological role, the UvrABC repair system catalyzes the recognition and processing of DNA lesions. UvrA is an ATPase and a DNA-binding protein. A damage recognition complex composed of 2 UvrA and 2 UvrB subunits scans DNA for abnormalities. When the presence of a lesion has been verified by UvrB, the UvrA molecules dissociate. In Mycoplasma genitalium (strain ATCC 33530 / DSM 19775 / NCTC 10195 / G37) (Mycoplasmoides genitalium), this protein is UvrABC system protein A.